The primary structure comprises 1613 residues: Myosin-IIIa (1613 aa).

Residues 21–287 (WEIIETIGKG…VSDLLKHKFI (267 aa)) enclose the Protein kinase domain. Residues 27–35 (IGKGTYGKV) and lysine 50 each bind ATP. The active-site Proton acceptor is the aspartate 150. Positions 338–1052 (KDVDDLATLD…HVEQLNLMRK (715 aa)) constitute a Myosin motor domain. Residues 933-955 (LMDLLSKMVVGQPHFVRCIKPNN) are actin-binding. 2 consecutive IQ domains span residues 1054–1083 (ATNK…KRKS) and 1081–1110 (RKSS…MKNT). 2 disordered regions span residues 1136-1168 (VKKQ…TAPF) and 1476-1506 (SGVS…EDST). Low complexity predominate over residues 1145-1161 (PTNESNTSTPNNKESPS). An interaction with MORN4 region spans residues 1398 to 1476 (EGVHHSKMVD…RHVSTHQYLS (79 aa)). Positions 1488–1497 (RPPRRPRKPK) are enriched in basic residues.

This sequence in the C-terminal section; belongs to the TRAFAC class myosin-kinesin ATPase superfamily. Myosin family. In the N-terminal section; belongs to the protein kinase superfamily. STE Ser/Thr protein kinase family. In terms of assembly, interacts with MORN4. Interacts (via C-terminus) with ESPN and ESPNL. In terms of tissue distribution, expressed in the cochlear hair cells (at protein level). Expressed in utricle hair bundles (at protein level).

The protein localises to the cytoplasm. It is found in the cytoskeleton. Its subcellular location is the cell projection. The protein resides in the filopodium tip. It localises to the stereocilium. It carries out the reaction L-seryl-[protein] + ATP = O-phospho-L-seryl-[protein] + ADP + H(+). It catalyses the reaction L-threonyl-[protein] + ATP = O-phospho-L-threonyl-[protein] + ADP + H(+). The enzyme catalyses ATP + H2O = ADP + phosphate + H(+). Actin-dependent motor protein with a protein kinase activity, playing an essential role in hearing. Probably plays also a role in vision. Required for normal cochlear hair bundle development and hearing. Plays an important role in the early steps of cochlear hair bundle morphogenesis. Influences the number and lengths of stereocilia to be produced and limits the growth of microvilli within the forming auditory hair bundles thereby contributing to the architecture of the hair bundle, including its staircase pattern. Involved in the elongation of actin in stereocilia tips by transporting the actin regulatory factor ESPN to the plus ends of actin filaments. The protein is Myosin-IIIa (Myo3a) of Mus musculus (Mouse).